The primary structure comprises 446 residues: MREILHIQGGQCGNQIGAKFWEVICGEHGVDPTGTYTGTSPQQLERINVYFNEASGGRHVPRAVLMDLEPGTMDSLRSGPIGGIFRPDNFVFGQSGAGNNWAKGHYTEGAELIDSVLDVVRKEAENCDCLQGFQVCHSLGGGTGSGMGTLLISKIREEYPDRMMLTFSVFPSPKVSDTVVEPYNATLSVHQLVENADECMVLDNEALYDICFRTLKLTNPSFGDLNHLISATMSGVTCCLRFPGQLNSDLRKLAVNLIPFPRLHFFMVGFAPLTSRGSQQYRALTVPELTQQMWDAKNMMCAADPRHGRYLTASAMFRGRMSTKEVDEQMINVQNKNSSYFVEWIPNNVKSSVCDIPPVGLSMASTFVGNSTSIQEMFRRVSEQFTAMFRRKAFLHWYTSEGMDEMEFTEAESNMNDLVAEYQQYQDATAEDDYDEDDDAAAADEA.

GTP is bound by residues glutamine 11, glutamate 69, serine 138, glycine 142, threonine 143, glycine 144, asparagine 204, and asparagine 226. Mg(2+) is bound at residue glutamate 69. Residues 426 to 446 are disordered; it reads QDATAEDDYDEDDDAAAADEA. Positions 429–446 are enriched in acidic residues; it reads TAEDDYDEDDDAAAADEA.

This sequence belongs to the tubulin family. As to quaternary structure, dimer of alpha and beta chains. A typical microtubule is a hollow water-filled tube with an outer diameter of 25 nm and an inner diameter of 15 nM. Alpha-beta heterodimers associate head-to-tail to form protofilaments running lengthwise along the microtubule wall with the beta-tubulin subunit facing the microtubule plus end conferring a structural polarity. Microtubules usually have 13 protofilaments but different protofilament numbers can be found in some organisms and specialized cells. The cofactor is Mg(2+). Expressed in anthers.

It localises to the cytoplasm. The protein resides in the cytoskeleton. In terms of biological role, tubulin is the major constituent of microtubules, a cylinder consisting of laterally associated linear protofilaments composed of alpha- and beta-tubulin heterodimers. Microtubules grow by the addition of GTP-tubulin dimers to the microtubule end, where a stabilizing cap forms. Below the cap, tubulin dimers are in GDP-bound state, owing to GTPase activity of alpha-tubulin. This chain is Tubulin beta-8 chain (TUBB8), found in Oryza sativa subsp. japonica (Rice).